The sequence spans 164 residues: ATP synthase subunit b 1 (164 aa).

A helical transmembrane segment spans residues 8–28; that stretch reads PETWVAIAFVILMGLFAYLGV.

The protein belongs to the ATPase B chain family. In terms of assembly, F-type ATPases have 2 components, F(1) - the catalytic core - and F(0) - the membrane proton channel. F(1) has five subunits: alpha(3), beta(3), gamma(1), delta(1), epsilon(1). F(0) has three main subunits: a(1), b(2) and c(10-14). The alpha and beta chains form an alternating ring which encloses part of the gamma chain. F(1) is attached to F(0) by a central stalk formed by the gamma and epsilon chains, while a peripheral stalk is formed by the delta and b chains.

It is found in the cell inner membrane. F(1)F(0) ATP synthase produces ATP from ADP in the presence of a proton or sodium gradient. F-type ATPases consist of two structural domains, F(1) containing the extramembraneous catalytic core and F(0) containing the membrane proton channel, linked together by a central stalk and a peripheral stalk. During catalysis, ATP synthesis in the catalytic domain of F(1) is coupled via a rotary mechanism of the central stalk subunits to proton translocation. Functionally, component of the F(0) channel, it forms part of the peripheral stalk, linking F(1) to F(0). In Bradyrhizobium sp. (strain ORS 278), this protein is ATP synthase subunit b 1.